We begin with the raw amino-acid sequence, 248 residues long: Ferric nitrobindin-like protein (248 aa).

2 stretches are compositionally biased toward polar residues: residues 1 to 25 and 32 to 43; these read MSSD…TNSG and QAVNLAAEQSKS. Positions 1–49 are disordered; sequence MSSDKANNQSPDQGANTPAESTNSGPKLDGNQAVNLAAEQSKSTADKNL. Residues 82-88 carry the GXWXGXG motif; it reads GVWRGQG. A disordered region spans residues 118-147; that stretch reads SRTWKINPPAEEGAEADGDEASAESAGEPE. The span at 129–139 shows a compositional bias: acidic residues; sequence EGAEADGDEAS.

This sequence belongs to the nitrobindin family.

This Corynebacterium urealyticum (strain ATCC 43042 / DSM 7109) protein is Ferric nitrobindin-like protein.